The primary structure comprises 338 residues: Aspartate carbamoyltransferase catalytic subunit (338 aa).

Residues arginine 59 and threonine 60 each coordinate carbamoyl phosphate. Lysine 87 lines the L-aspartate pocket. Carbamoyl phosphate contacts are provided by arginine 109, histidine 142, and glutamine 145. L-aspartate contacts are provided by arginine 182 and arginine 248. Glycine 289 and proline 290 together coordinate carbamoyl phosphate.

It belongs to the aspartate/ornithine carbamoyltransferase superfamily. ATCase family. As to quaternary structure, heterododecamer (2C3:3R2) of six catalytic PyrB chains organized as two trimers (C3), and six regulatory PyrI chains organized as three dimers (R2).

The enzyme catalyses carbamoyl phosphate + L-aspartate = N-carbamoyl-L-aspartate + phosphate + H(+). It participates in pyrimidine metabolism; UMP biosynthesis via de novo pathway; (S)-dihydroorotate from bicarbonate: step 2/3. Catalyzes the condensation of carbamoyl phosphate and aspartate to form carbamoyl aspartate and inorganic phosphate, the committed step in the de novo pyrimidine nucleotide biosynthesis pathway. The sequence is that of Aspartate carbamoyltransferase catalytic subunit from Synechococcus elongatus (strain ATCC 33912 / PCC 7942 / FACHB-805) (Anacystis nidulans R2).